Reading from the N-terminus, the 380-residue chain is Two-component response regulator ORR28 (380 aa).

Residues 13 to 130 enclose the Response regulatory domain; that stretch reads SAMVIDEDKC…TIQNLWQHLD (118 aa). Asp-65 is modified (4-aspartylphosphate). Positions 169–223 form a DNA-binding region, myb-like GARP; the sequence is RKYYLMWTPHLQKKFLHALEILGEGQISLMIMDVDNIDRKQISTHLQKHRLQLKK. The tract at residues 225 to 245 is disordered; the sequence is LSKASFTKGSNEDTSNPSAKN. Residues 228–245 show a composition bias toward polar residues; sequence ASFTKGSNEDTSNPSAKN.

It belongs to the ARR family. Type-B subfamily. Two-component system major event consists of a His-to-Asp phosphorelay between a sensor histidine kinase (HK) and a response regulator (RR). In plants, the His-to-Asp phosphorelay involves an additional intermediate named Histidine-containing phosphotransfer protein (HPt). This multistep phosphorelay consists of a His-Asp-His-Asp sequential transfer of a phosphate group between first a His and an Asp of the HK protein, followed by the transfer to a conserved His of the HPt protein and finally the transfer to an Asp in the receiver domain of the RR protein.

The protein localises to the nucleus. In terms of biological role, transcriptional activator that binds specific DNA sequence. Functions as a response regulator involved in His-to-Asp phosphorelay signal transduction system. Phosphorylation of the Asp residue in the receiver domain activates the ability of the protein to promote the transcription of target genes. May directly activate some type-A response regulators in response to cytokinins. The sequence is that of Two-component response regulator ORR28 from Oryza sativa subsp. indica (Rice).